We begin with the raw amino-acid sequence, 202 residues long: Ribonuclease HII (202 aa).

The RNase H type-2 domain maps to 18–202 (GQYAGVDEVG…KSFRPVREAM (185 aa)). Asp24, Glu25, and Asp116 together coordinate a divalent metal cation.

Belongs to the RNase HII family. Mn(2+) serves as cofactor. Requires Mg(2+) as cofactor.

It is found in the cytoplasm. It carries out the reaction Endonucleolytic cleavage to 5'-phosphomonoester.. Functionally, endonuclease that specifically degrades the RNA of RNA-DNA hybrids. In Shewanella piezotolerans (strain WP3 / JCM 13877), this protein is Ribonuclease HII.